A 395-amino-acid polypeptide reads, in one-letter code: MAKETYVRTKPHVNIGTIGHVDHGKTTLTAAISKVLAEKQGVDATDFAEIDNAPEEKERGITINTSHIEYETEKRHYAHIDAPGHADYVKNMITGAAQMDGAILVVAATDGPMPQTREHILLARQVGVDYLVVFLNKTDLVDDEELVELVEMEVRELLSEYDFPGDDIPVLKGSALKALEGDPEQVKVIEELMDTVDSYIPEPARETDKPFLMPVEDVFTITGRGTVASGRVDRGVLTTGTEIEIVGLKDEVQKTTVTGIEMFRKTLEEAQAGDNIGALLRGVDRSNIERGQVLAKPGSIKTHKKFKAEVYVLTKEEGGRHTPFFTNYRPQFYFHTTDVTGVVELPAGVEMVMPGDQVTFEIELISPVAIEQGLKFTVREGGHTVGAGTVTDIED.

In terms of domain architecture, tr-type G spans 10–204; the sequence is KPHVNIGTIG…TVDSYIPEPA (195 aa). Residues 19–26 are G1; sequence GHVDHGKT. 19–26 contacts GTP; sequence GHVDHGKT. Thr26 lines the Mg(2+) pocket. Positions 60–64 are G2; it reads GITIN. Positions 81 to 84 are G3; that stretch reads DAPG. Residues 81-85 and 136-139 each bind GTP; these read DAPGH and NKTD. The tract at residues 136–139 is G4; it reads NKTD. The tract at residues 174–176 is G5; the sequence is SAL.

Belongs to the TRAFAC class translation factor GTPase superfamily. Classic translation factor GTPase family. EF-Tu/EF-1A subfamily. In terms of assembly, monomer.

It localises to the cytoplasm. It catalyses the reaction GTP + H2O = GDP + phosphate + H(+). Functionally, GTP hydrolase that promotes the GTP-dependent binding of aminoacyl-tRNA to the A-site of ribosomes during protein biosynthesis. In Leuconostoc mesenteroides subsp. mesenteroides (strain ATCC 8293 / DSM 20343 / BCRC 11652 / CCM 1803 / JCM 6124 / NCDO 523 / NBRC 100496 / NCIMB 8023 / NCTC 12954 / NRRL B-1118 / 37Y), this protein is Elongation factor Tu.